Here is a 373-residue protein sequence, read N- to C-terminus: tRNA-specific 2-thiouridylase MnmA (373 aa).

ATP is bound by residues 12–19 (GMSGGVDS) and M38. The interaction with target base in tRNA stretch occupies residues 98 to 100 (NPD). C103 (nucleophile) is an active-site residue. C103 and C200 are disulfide-bonded. G127 serves as a coordination point for ATP. Residues 150–152 (KDQ) are interaction with tRNA. C200 functions as the Cysteine persulfide intermediate in the catalytic mechanism. The interaction with tRNA stretch occupies residues 312–313 (RY).

This sequence belongs to the MnmA/TRMU family.

It is found in the cytoplasm. It carries out the reaction S-sulfanyl-L-cysteinyl-[protein] + uridine(34) in tRNA + AH2 + ATP = 2-thiouridine(34) in tRNA + L-cysteinyl-[protein] + A + AMP + diphosphate + H(+). Its function is as follows. Catalyzes the 2-thiolation of uridine at the wobble position (U34) of tRNA, leading to the formation of s(2)U34. In Streptococcus pyogenes serotype M3 (strain SSI-1), this protein is tRNA-specific 2-thiouridylase MnmA.